We begin with the raw amino-acid sequence, 196 residues long: MSQQIKLLVGLANPGPEYAKTRHNAGAWVVEELARVHNITLKNEAKFYGLTGRIVMNGQELRLLIPTTFMNLSGKAIAALAKFYQIQPEEIMVAHDELDLPPGIAKFKKGGGHGGHNGLRDTISKLGNNKEFYRLRIGIGHPGHKDKVAGFVLGKAPASEQSLLDATVDESVRCLDILIKDGLSKAQNRLHTFKAE.

Tyr18 is a tRNA binding site. The active-site Proton acceptor is the His23. TRNA-binding residues include Phe69, Asn71, and Asn117.

Belongs to the PTH family. As to quaternary structure, monomer.

The protein resides in the cytoplasm. The catalysed reaction is an N-acyl-L-alpha-aminoacyl-tRNA + H2O = an N-acyl-L-amino acid + a tRNA + H(+). Hydrolyzes ribosome-free peptidyl-tRNAs (with 1 or more amino acids incorporated), which drop off the ribosome during protein synthesis, or as a result of ribosome stalling. Its function is as follows. Catalyzes the release of premature peptidyl moieties from peptidyl-tRNA molecules trapped in stalled 50S ribosomal subunits, and thus maintains levels of free tRNAs and 50S ribosomes. The sequence is that of Peptidyl-tRNA hydrolase from Vibrio vulnificus (strain CMCP6).